The following is a 113-amino-acid chain: Large ribosomal subunit protein bL17 (113 aa).

Belongs to the bacterial ribosomal protein bL17 family. In terms of assembly, part of the 50S ribosomal subunit. Contacts protein L32.

The polypeptide is Large ribosomal subunit protein bL17 (Clostridium perfringens (strain ATCC 13124 / DSM 756 / JCM 1290 / NCIMB 6125 / NCTC 8237 / Type A)).